A 332-amino-acid polypeptide reads, in one-letter code: Ubiquinone biosynthesis protein COQ4, mitochondrial (332 aa).

The transit peptide at 1–24 directs the protein to the mitochondrion; the sequence is MLRLGVSRTPINRQFVGYEQRRHF. The Zn(2+) site is built by H210, D211, H214, and E226.

This sequence belongs to the COQ4 family. In terms of assembly, component of a multi-subunit COQ enzyme complex, composed of at least COQ3, COQ4, COQ5, COQ6, COQ7 and COQ9. The cofactor is Zn(2+).

It localises to the mitochondrion inner membrane. The enzyme catalyses a 4-hydroxy-3-methoxy-5-(all-trans-polyprenyl)benzoate + H(+) = a 2-methoxy-6-(all-trans-polyprenyl)phenol + CO2. The protein operates within cofactor biosynthesis; ubiquinone biosynthesis. In terms of biological role, lyase that catalyzes the C1-decarboxylation of 4-hydroxy-3-methoxy-5-(all-trans-polyprenyl)benzoic acid into 2-methoxy-6-(all-trans-polyprenyl)phenol during ubiquinone biosynthesis. The sequence is that of Ubiquinone biosynthesis protein COQ4, mitochondrial from Zygosaccharomyces rouxii (strain ATCC 2623 / CBS 732 / NBRC 1130 / NCYC 568 / NRRL Y-229).